A 1006-amino-acid polypeptide reads, in one-letter code: Unconventional myosin-Id (1006 aa).

N-acetylalanine is present on A2. Positions F9 to A695 constitute a Myosin motor domain. G102–T109 contributes to the ATP binding site. S200 is modified (phosphoserine). Residue Y536 is modified to Phosphotyrosine. The tract at residues M572–D594 is actin-binding. 2 IQ domains span residues V699–K719 and T721–H741. Residues G812–G1005 form the TH1 domain.

The protein belongs to the TRAFAC class myosin-kinesin ATPase superfamily. Myosin family. As to quaternary structure, interacts (via the two IQ motifs) with calmodulin. Binds an additional calmodulin chain via a third, C-terminal region. Interacts with F-actin.

It is found in the cytoplasm. Its subcellular location is the perikaryon. It localises to the cell projection. The protein localises to the dendrite. The protein resides in the early endosome. It is found in the cell cortex. In terms of biological role, unconventional myosin that functions as actin-based motor protein with ATPase activity. Plays a role in endosomal protein trafficking, and especially in the transfer of cargo proteins from early to recycling endosomes. Required for normal planar cell polarity in ciliated tracheal cells, for normal rotational polarity of cilia, and for coordinated, unidirectional ciliary movement in the trachea. Required for normal, polarized cilia organization in brain ependymal epithelial cells. This is Unconventional myosin-Id (MYO1D) from Bos taurus (Bovine).